Consider the following 95-residue polypeptide: Fatty acid-binding protein, liver (95 aa).

An N6-succinyllysine mark is found at Lys-13 and Lys-18. Residue Ser-21 is modified to Phosphoserine. Position 28 is an N6-succinyllysine (Lys-28). Thr-33 bears the Phosphothreonine mark. The residue at position 38 (Ser-38) is a Phosphoserine. An N6-succinyllysine mark is found at Lys-39, Lys-47, and Lys-59. Ser-69 bears the Phosphoserine mark. Position 90 is an N6-succinyllysine (Lys-90).

The protein belongs to the calycin superfamily. Fatty-acid binding protein (FABP) family. Monomer.

The protein localises to the cytoplasm. Its function is as follows. This protein binds free fatty acids and their coenzyme A derivatives, bilirubin, and some other small molecules in the cytoplasm; it may be involved in intracellular lipid transport. This is Fatty acid-binding protein, liver (FABP1) from Chaetophractus villosus (South American armadillo).